Reading from the N-terminus, the 118-residue chain is Ribonuclease P protein component (118 aa).

The protein belongs to the RnpA family. In terms of assembly, consists of a catalytic RNA component (M1 or rnpB) and a protein subunit.

It catalyses the reaction Endonucleolytic cleavage of RNA, removing 5'-extranucleotides from tRNA precursor.. Functionally, RNaseP catalyzes the removal of the 5'-leader sequence from pre-tRNA to produce the mature 5'-terminus. It can also cleave other RNA substrates such as 4.5S RNA. The protein component plays an auxiliary but essential role in vivo by binding to the 5'-leader sequence and broadening the substrate specificity of the ribozyme. This is Ribonuclease P protein component from Vibrio campbellii (strain ATCC BAA-1116).